The sequence spans 270 residues: Orotidine 5'-phosphate decarboxylase (270 aa).

Lysine 89 acts as the Proton donor in catalysis.

The protein belongs to the OMP decarboxylase family. Type 2 subfamily.

The enzyme catalyses orotidine 5'-phosphate + H(+) = UMP + CO2. It participates in pyrimidine metabolism; UMP biosynthesis via de novo pathway; UMP from orotate: step 2/2. In Dehalococcoides mccartyi (strain ATCC BAA-2266 / KCTC 15142 / 195) (Dehalococcoides ethenogenes (strain 195)), this protein is Orotidine 5'-phosphate decarboxylase.